The primary structure comprises 102 residues: Small ribosomal subunit protein uS10 (102 aa).

This sequence belongs to the universal ribosomal protein uS10 family. Part of the 30S ribosomal subunit.

Its function is as follows. Involved in the binding of tRNA to the ribosomes. In Cereibacter sphaeroides (strain ATCC 17029 / ATH 2.4.9) (Rhodobacter sphaeroides), this protein is Small ribosomal subunit protein uS10.